The following is a 140-amino-acid chain: Probable glycine cleavage system H protein 3 (140 aa).

A Lipoyl-binding domain is found at 29-110 (VVSIGVTDLG…PYDSWIVKIR (82 aa)). Residue Lys70 is modified to N6-lipoyllysine.

Belongs to the GcvH family. The glycine cleavage system is composed of four proteins: P, T, L and H. It depends on (R)-lipoate as a cofactor.

Its function is as follows. The glycine cleavage system catalyzes the degradation of glycine. The H protein shuttles the methylamine group of glycine from the P protein to the T protein. The polypeptide is Probable glycine cleavage system H protein 3 (Saccharolobus solfataricus (strain ATCC 35092 / DSM 1617 / JCM 11322 / P2) (Sulfolobus solfataricus)).